We begin with the raw amino-acid sequence, 544 residues long: Chaperonin GroEL (544 aa).

Residues 30 to 33 (TLGP), Lys51, 87 to 91 (DGTTT), Gly415, 479 to 481 (NAA), and Asp495 contribute to the ATP site. Over residues 525 to 537 (PQDTPATAAAPDM) the composition is skewed to low complexity. The interval 525-544 (PQDTPATAAAPDMGGMGGMM) is disordered.

Belongs to the chaperonin (HSP60) family. As to quaternary structure, forms a cylinder of 14 subunits composed of two heptameric rings stacked back-to-back. Interacts with the co-chaperonin GroES.

It is found in the cytoplasm. It catalyses the reaction ATP + H2O + a folded polypeptide = ADP + phosphate + an unfolded polypeptide.. Functionally, together with its co-chaperonin GroES, plays an essential role in assisting protein folding. The GroEL-GroES system forms a nano-cage that allows encapsulation of the non-native substrate proteins and provides a physical environment optimized to promote and accelerate protein folding. This chain is Chaperonin GroEL, found in Ruthia magnifica subsp. Calyptogena magnifica.